A 103-amino-acid polypeptide reads, in one-letter code: Large ribosomal subunit protein eL21 (103 aa).

The protein belongs to the eukaryotic ribosomal protein eL21 family.

The protein is Large ribosomal subunit protein eL21 of Sulfurisphaera tokodaii (strain DSM 16993 / JCM 10545 / NBRC 100140 / 7) (Sulfolobus tokodaii).